The sequence spans 158 residues: Putative 8-oxo-dGTP diphosphatase YtkD (158 aa).

The Nudix hydrolase domain occupies 6–145 (DYYQNTVQLS…SFIMKDSVLP (140 aa)). Residues 53 to 74 (GKVEPMECAEEAALREVKEETG) carry the Nudix box motif. 2 residues coordinate Mg(2+): E68 and E72.

Belongs to the Nudix hydrolase family. It depends on Mg(2+) as a cofactor.

It carries out the reaction 8-oxo-dGTP + H2O = 8-oxo-dGMP + diphosphate + H(+). Its activity is regulated as follows. Not induced by oxidative damage (following treatment with paraquat or hydrogen peroxide). Not induced by mitomycin C. Not induced by sigma-B general stress inducers such as sodium chloride, ethanol or heat. In terms of biological role, involved in the GO system responsible for removing an oxidatively damaged form of guanine (7,8-dihydro-8-oxoguanine, 8-oxo-dGTP) from DNA and the nucleotide pool. 8-oxo-dGTP is inserted opposite dA and dC residues of template DNA with almost equal efficiency thus leading to A.T to G.C transversions. Functions, in conjunction with MutT, to protect vegetatively growing cells from DNA-damaging agents such as H(2)O(2) or t-BHP (t-butylhydroperoxide). The 2 proteins do not however protect spores. According to PubMed:15576788, phosphohydrolase that catalyzes the hydrolysis of all common nucleoside triphosphates as well as of the mutagenic analog 8-oxo-dGTP. The high catalytic efficiency on dGTP is in contrast to results from PubMed:14761999. According to PubMed:14761999, catalyzes the hydrolysis of 8-oxo-dGTP with a specific activity 413 times higher than that exhibited against dGTP. Preferentially catalyzes the hydrolysis of 8-oxo-dGTP and 8-oxo-GTP. According to PubMed:15576788, hydrolyzes nucleoside triphosphates in a stepwise fashion through the diphosphate to the monophosphate, releasing two molecules of inorganic orthophosphate. This Bacillus subtilis (strain 168) protein is Putative 8-oxo-dGTP diphosphatase YtkD (ytkD).